The primary structure comprises 376 residues: Thiol-disulfide oxidoreductase LTO1 (376 aa).

Residues 1–45 constitute a chloroplast transit peptide; that stretch reads MMARFVSVSSCQFHFGFREVSPPSVTSYPRRFEVSDRRFPAIPIK. The disordered stretch occupies residues 44–77; the sequence is IKCSSSEPENGEDSAPSLSSSSSSSTSEVSTSNS. Residues 46–81 lie on the Stromal side of the membrane; it reads CSSSEPENGEDSAPSLSSSSSSSTSEVSTSNSSTYN. A compositionally biased stretch (low complexity) spans 57–77; it reads SAPSLSSSSSSSTSEVSTSNS. A helical transmembrane segment spans residues 82-102; sequence WYTGIGGIGMLDTAYLTYLKV. Topologically, residues 103 to 125 are lumenal; the sequence is TGSDAFCPIGGGTCGDVLNSDYA. A disulfide bond links cysteine 109 and cysteine 116. A helical membrane pass occupies residues 126 to 146; it reads VVFGVPLPVIGFVMYGVVTAL. Topologically, residues 147–165 are stromal; it reads SAELGEGNLPFGISKSNGR. Residues 166-186 traverse the membrane as a helical segment; the sequence is FALFGITTAMASASAYFLYIL. The Lumenal portion of the chain corresponds to 187 to 192; sequence STKLSG. Residues 193–213 traverse the membrane as a helical segment; the sequence is SSCLYCLVSAFLSFSLFFLSV. The cysteines at positions 195 and 198 are disulfide-linked. The Stromal segment spans residues 214–223; sequence KDVKLQEIQQ. A helical transmembrane segment spans residues 224-244; the sequence is VVGLQICLAIIVVASLTASYS. Topologically, residues 245 to 376 are lumenal; the sequence is TAQPIPSRSG…DQANETNQLQ (132 aa). 2 cysteine pairs are disulfide-bonded: cysteine 293-cysteine 296 and cysteine 316-cysteine 331.

This sequence belongs to the VKOR family. In terms of assembly, interacts with the PSII subunits PSBO1 and PSBO2. Interacts with TL17, TL20.3, HCF164, PETJ, VDE1, EDA3, FKBP13 and FKBP20-2. As to expression, expressed in cotyledons, rosette leaves, stems, cauline leaves and flowers.

The protein resides in the plastid. It is found in the chloroplast thylakoid membrane. In terms of biological role, thiol-disulfide oxidoreductase catalyzing disulfide bond formation of chloroplast proteins and involved in redox regulation and photosynthetic electron transport. Required for the assembly of photosystem II (PSII) through the formation of disulfide bond in PSBO, a subunit of the PSII oxygen-evolving complex in the thylakoid lumen. Involved in the formation of disulfide bonds in the lumenal protein FKBP13. In vitro, reduces phylloquinone (vitamin K1) and menaquinone (vitamin K2) to their respective quinol. Cannot reduce phylloquinone epoxide to phylloquinone. Plays an important role in regulating the thylakoid lumen redox. The sequence is that of Thiol-disulfide oxidoreductase LTO1 from Arabidopsis thaliana (Mouse-ear cress).